The chain runs to 543 residues: Probable protein kinase UbiB (543 aa).

Positions 123–501 (DFDIVPLASA…KRQQAKGQFL (379 aa)) constitute a Protein kinase domain. Residues 129–137 (LASASIAQV) and Lys152 contribute to the ATP site. Asp287 acts as the Proton acceptor in catalysis. A helical transmembrane segment spans residues 517-539 (TSNITALASISAATGVTFWLLSW).

The protein belongs to the ABC1 family. UbiB subfamily.

It is found in the cell inner membrane. It functions in the pathway cofactor biosynthesis; ubiquinone biosynthesis [regulation]. Is probably a protein kinase regulator of UbiI activity which is involved in aerobic coenzyme Q (ubiquinone) biosynthesis. The polypeptide is Probable protein kinase UbiB (Aliivibrio salmonicida (strain LFI1238) (Vibrio salmonicida (strain LFI1238))).